A 698-amino-acid chain; its full sequence is DNA ligase (698 aa).

NAD(+) contacts are provided by residues 35–39 (DSVYD), 84–85 (SL), and Glu123. Lys125 serves as the catalytic N6-AMP-lysine intermediate. NAD(+) contacts are provided by Arg146, Glu183, Lys302, and Lys326. The Zn(2+) site is built by Cys420, Cys423, Cys438, and Cys443. Residues 612–698 (NGKGHLNGQT…QNSADTIHLL (87 aa)) enclose the BRCT domain.

This sequence belongs to the NAD-dependent DNA ligase family. LigA subfamily. It depends on Mg(2+) as a cofactor. Requires Mn(2+) as cofactor.

The enzyme catalyses NAD(+) + (deoxyribonucleotide)n-3'-hydroxyl + 5'-phospho-(deoxyribonucleotide)m = (deoxyribonucleotide)n+m + AMP + beta-nicotinamide D-nucleotide.. Its function is as follows. DNA ligase that catalyzes the formation of phosphodiester linkages between 5'-phosphoryl and 3'-hydroxyl groups in double-stranded DNA using NAD as a coenzyme and as the energy source for the reaction. It is essential for DNA replication and repair of damaged DNA. The sequence is that of DNA ligase from Synechococcus sp. (strain WH7803).